Consider the following 103-residue polypeptide: Large ribosomal subunit protein bL21 (103 aa).

It belongs to the bacterial ribosomal protein bL21 family. As to quaternary structure, part of the 50S ribosomal subunit. Contacts protein L20.

In terms of biological role, this protein binds to 23S rRNA in the presence of protein L20. The polypeptide is Large ribosomal subunit protein bL21 (Chloroflexus aggregans (strain MD-66 / DSM 9485)).